A 202-amino-acid polypeptide reads, in one-letter code: Ras-related protein RABD2b (202 aa).

GTP contacts are provided by residues 15–23, 33–40, 63–67, 121–124, and 151–153; these read GDSGVGKSC, YLDSYIST, DTAGQ, NKND, and SAK. Residues 37–45 carry the Effector region motif; sequence YISTIGVDF. Positions 174–202 are disordered; it reads ASQPAGGAKPPTVQIRGQPVNQQSGCCSS. Polar residues predominate over residues 192-202; the sequence is PVNQQSGCCSS. S-geranylgeranyl cysteine attachment occurs at residues Cys199 and Cys200.

This sequence belongs to the small GTPase superfamily. Rab family.

The protein localises to the golgi apparatus. Its subcellular location is the trans-Golgi network membrane. The protein resides in the golgi apparatus membrane. Functionally, protein transport. Regulator of membrane traffic from the Golgi apparatus towards the endoplasmic reticulum (ER). In Arabidopsis thaliana (Mouse-ear cress), this protein is Ras-related protein RABD2b (RABD2B).